The chain runs to 327 residues: MRFPPLLFFQDSEAVKRIANSVRGTKDDDAEIKDHSMRFIRNAISGDQQKEILNVDMLRYIAWVLVALNENIVTARTVIRERDAVEDALKNQQPEDIENFADDLKINMKYNRDLERFEIGVFDFVKYASRVTGSQYRLSNQSVIKGIVYCQKDVAIKILRESFVSNMFKVIDSIDQTTASPVLSDQTDSINELREFYKKSVYAKLTIGRGNTKAFPPCMKEIIRNLHEGINVPHMGRLAIASFLHKVGYTEDEIVEYFRNAPDFDESITRYQIKHLSGEISGVEYSPPKCETMRSNHLCFMDDDKLCHQDWMKHPLTYYEVKSRRLG.

Cys218, Cys290, Cys299, and Cys307 together coordinate [4Fe-4S] cluster.

It belongs to the eukaryotic-type primase large subunit family. In terms of assembly, heterodimer of a small subunit (PriS) and a large subunit (PriL). Requires [4Fe-4S] cluster as cofactor.

Regulatory subunit of DNA primase, an RNA polymerase that catalyzes the synthesis of short RNA molecules used as primers for DNA polymerase during DNA replication. Stabilizes and modulates the activity of the small subunit, increasing the rate of DNA synthesis, and conferring RNA synthesis capability. The DNA polymerase activity may enable DNA primase to also catalyze primer extension after primer synthesis. May also play a role in DNA repair. This Thermoplasma volcanium (strain ATCC 51530 / DSM 4299 / JCM 9571 / NBRC 15438 / GSS1) protein is DNA primase large subunit PriL.